A 222-amino-acid polypeptide reads, in one-letter code: Polyadenylate-binding protein 2 (222 aa).

The segment at 1 to 43 is disordered; that stretch reads MTDNNNGEIVEDKDNEKLKGEDNINNHISNHNNTEETSFEDPE. Basic and acidic residues predominate over residues 10–24; the sequence is VEDKDNEKLKGEDNI. The region spanning 101–178 is the RRM domain; that stretch reads RSVYVGNVDY…RQLKITPKRT (78 aa).

Its subcellular location is the nucleus. Its function is as follows. Involved in the 3'-end formation of mRNA precursors (pre-mRNA) by the addition of a poly(A) tail of 200-250 nt to the upstream cleavage product. In Dictyostelium discoideum (Social amoeba), this protein is Polyadenylate-binding protein 2 (pabpn1).